The chain runs to 261 residues: Kallikrein 1-related peptidase b26 (261 aa).

Residues M1–A18 form the signal peptide. Residues P19 to R24 constitute a propeptide, activation peptide. The Peptidase S1 domain occupies V25 to M258. Cystine bridges form between C31–C173, C50–C66, C152–C219, C184–C198, and C209–C234. H65 acts as the Charge relay system in catalysis. N102 carries N-linked (GlcNAc...) asparagine glycosylation. The active-site Charge relay system is the D120. S213 serves as the catalytic Charge relay system.

The protein belongs to the peptidase S1 family. Kallikrein subfamily.

The enzyme catalyses Preferential cleavage of Arg-|-Xaa bonds in small molecule substrates. Highly selective action to release kallidin (lysyl-bradykinin) from kininogen involves hydrolysis of Met-|-Xaa or Leu-|-Xaa.. Its function is as follows. Glandular kallikreins cleave Met-Lys and Arg-Ser bonds in kininogen to release Lys-bradykinin. Prorenin-converting enzyme cleaves mouse REN-2 prorenin at a dibasic site to yield mature renin. This Mus musculus (Mouse) protein is Kallikrein 1-related peptidase b26 (Klk1b26).